A 440-amino-acid chain; its full sequence is MDRWQGIQHVVVVGLGITGLSVVNYLRKYHPSVTVQVIDTREIPPGQEQLSSDVALHRGGWNLEWLLNADLVVTNPGIALATPEIQQVLAAGIPVVGDIELFAWHVDTPVIAITGSNGKSTVTDLSGVLANAAGVKAAVGGNIGVPALDLISPDVELYVLELSSFQLETTSSLKLKAAAFLNLSEDHMDRYQGMGDYRQAKLRIFDHAETAVVNADDTQTFPDHAAHLQVVTFGVEQAAQFSLAQHQGREYLFARDEAVMACAELSLVGRHNVTNVLTVLALLDSAGVNFRLALDALKSYTGLTHRCQVVADNHGIKWVNDSKATNVASTLAALSGLKIEGQLYLLVGGVGKGADFTPLAPVLATLPVQLCCFGVDGHQFMPLHPSARFYDSMESIIRSIRPQLKSGDMVLLSPACASFDQFKNFMARGDIFAQLARQYA.

Residue Gly-115 to Thr-121 participates in ATP binding.

Belongs to the MurCDEF family.

It is found in the cytoplasm. It catalyses the reaction UDP-N-acetyl-alpha-D-muramoyl-L-alanine + D-glutamate + ATP = UDP-N-acetyl-alpha-D-muramoyl-L-alanyl-D-glutamate + ADP + phosphate + H(+). It participates in cell wall biogenesis; peptidoglycan biosynthesis. Its function is as follows. Cell wall formation. Catalyzes the addition of glutamate to the nucleotide precursor UDP-N-acetylmuramoyl-L-alanine (UMA). In Vibrio cholerae serotype O1 (strain ATCC 39541 / Classical Ogawa 395 / O395), this protein is UDP-N-acetylmuramoylalanine--D-glutamate ligase.